A 279-amino-acid polypeptide reads, in one-letter code: Acetyl-coenzyme A carboxylase carboxyl transferase subunit beta (279 aa).

In terms of domain architecture, CoA carboxyltransferase N-terminal spans 27-279 (LFLACPYCGT…IVKLHHRTEI (253 aa)). Positions 31, 34, 49, and 52 each coordinate Zn(2+). The segment at 31–52 (CPYCGTQMYNKQLGDYRVCAKC) adopts a C4-type zinc-finger fold.

This sequence belongs to the AccD/PCCB family. In terms of assembly, acetyl-CoA carboxylase is a heterohexamer composed of biotin carboxyl carrier protein (AccB), biotin carboxylase (AccC) and two subunits each of ACCase subunit alpha (AccA) and ACCase subunit beta (AccD). The cofactor is Zn(2+).

Its subcellular location is the cytoplasm. The enzyme catalyses N(6)-carboxybiotinyl-L-lysyl-[protein] + acetyl-CoA = N(6)-biotinyl-L-lysyl-[protein] + malonyl-CoA. The protein operates within lipid metabolism; malonyl-CoA biosynthesis; malonyl-CoA from acetyl-CoA: step 1/1. Functionally, component of the acetyl coenzyme A carboxylase (ACC) complex. Biotin carboxylase (BC) catalyzes the carboxylation of biotin on its carrier protein (BCCP) and then the CO(2) group is transferred by the transcarboxylase to acetyl-CoA to form malonyl-CoA. This is Acetyl-coenzyme A carboxylase carboxyl transferase subunit beta from Leuconostoc citreum (strain KM20).